A 1067-amino-acid chain; its full sequence is Cadmium/zinc-transporting ATPase HMA2 (1067 aa).

In terms of domain architecture, HMA spans 9-75 (QKSYFDVLGI…ALNQARLEAS (67 aa)). Helical transmembrane passes span 94 to 114 (YVLL…WHPL), 117 to 137 (FALV…IAAI), 140 to 160 (LTLD…ALKD), 162 to 182 (SEAG…TRAS), 313 to 333 (YTPA…IAKA), 342 to 362 (LALV…TPIA), 649 to 669 (IIVN…LAFA), and 673 to 693 (LIWA…MYSM). Disordered regions lie at residues 711 to 739 (HHGS…HHCS), 760 to 790 (HDHH…SHGH), and 960 to 996 (NDTH…GHHP). Over residues 724–735 (HGSHAKKNHGVS) the composition is skewed to basic residues. 2 stretches are compositionally biased toward basic and acidic residues: residues 760 to 774 (HDHH…EPAH) and 975 to 996 (SSDH…GHHP).

It belongs to the cation transport ATPase (P-type) (TC 3.A.3) family. Type IB subfamily. In terms of tissue distribution, in roots, localizes at the pericycle cells. In nodes, localizes in the phloem parenchyma and companion cells of both enlarged and diffuse vascular bundles.

Its subcellular location is the cell membrane. It catalyses the reaction Zn(2+)(in) + ATP + H2O = Zn(2+)(out) + ADP + phosphate + H(+). It carries out the reaction Cd(2+)(in) + ATP + H2O = Cd(2+)(out) + ADP + phosphate + H(+). Functionally, zinc/cadmium transporter that plays an essential role in promoting translocation of zinc and cadmium from roots to shoots. May control cadmium loading into xylem. In roots, transports zinc and cadmium from the apoplast to the symplast to facilitate translocation via the phloem. In nodes, functions to load zinc and cadmium to the phloem for the preferential distribution to the upper nodes and panicles. This chain is Cadmium/zinc-transporting ATPase HMA2, found in Oryza sativa subsp. japonica (Rice).